The primary structure comprises 887 residues: Cytoplasmic aconitate hydratase (887 aa).

Residues glutamine 84 and 204-206 (DSH) each bind substrate. [4Fe-4S] cluster contacts are provided by cysteine 436, cysteine 502, and cysteine 505. Substrate is bound by residues arginine 535, arginine 540, arginine 697, and 777–778 (SR).

It belongs to the aconitase/IPM isomerase family. In terms of assembly, interacts with gex-3. [4Fe-4S] cluster serves as cofactor.

The protein localises to the cytoplasm. It localises to the cytosol. It catalyses the reaction citrate = D-threo-isocitrate. Catalyzes the isomerization of citrate to isocitrate via cis-aconitate. Has probably no RNA-binding activity. The protein is Cytoplasmic aconitate hydratase (aco-1) of Caenorhabditis elegans.